The sequence spans 920 residues: Isoleucine--tRNA ligase (920 aa).

Positions 58–68 (PYANGHLHLGH) match the 'HIGH' region motif. Residue glutamate 569 coordinates L-isoleucyl-5'-AMP. Residues 610–614 (KMSKS) carry the 'KMSKS' region motif. An ATP-binding site is contributed by lysine 613. Zn(2+)-binding residues include cysteine 895, cysteine 898, cysteine 910, and cysteine 913.

The protein belongs to the class-I aminoacyl-tRNA synthetase family. IleS type 1 subfamily. Monomer. Requires Zn(2+) as cofactor.

The protein resides in the cytoplasm. It catalyses the reaction tRNA(Ile) + L-isoleucine + ATP = L-isoleucyl-tRNA(Ile) + AMP + diphosphate. In terms of biological role, catalyzes the attachment of isoleucine to tRNA(Ile). As IleRS can inadvertently accommodate and process structurally similar amino acids such as valine, to avoid such errors it has two additional distinct tRNA(Ile)-dependent editing activities. One activity is designated as 'pretransfer' editing and involves the hydrolysis of activated Val-AMP. The other activity is designated 'posttransfer' editing and involves deacylation of mischarged Val-tRNA(Ile). In Helicobacter pylori (strain HPAG1), this protein is Isoleucine--tRNA ligase.